The following is a 340-amino-acid chain: Glycerol-3-phosphate dehydrogenase [NAD(P)+] (340 aa).

Serine 12, tryptophan 13, and lysine 110 together coordinate NADPH. The sn-glycerol 3-phosphate site is built by lysine 110, glycine 141, and serine 143. Alanine 145 lines the NADPH pocket. Residues lysine 196, aspartate 249, serine 259, arginine 260, and asparagine 261 each coordinate sn-glycerol 3-phosphate. Catalysis depends on lysine 196, which acts as the Proton acceptor. Arginine 260 serves as a coordination point for NADPH. 2 residues coordinate NADPH: valine 284 and glutamate 286.

This sequence belongs to the NAD-dependent glycerol-3-phosphate dehydrogenase family.

It is found in the cytoplasm. The catalysed reaction is sn-glycerol 3-phosphate + NAD(+) = dihydroxyacetone phosphate + NADH + H(+). The enzyme catalyses sn-glycerol 3-phosphate + NADP(+) = dihydroxyacetone phosphate + NADPH + H(+). It participates in membrane lipid metabolism; glycerophospholipid metabolism. Catalyzes the reduction of the glycolytic intermediate dihydroxyacetone phosphate (DHAP) to sn-glycerol 3-phosphate (G3P), the key precursor for phospholipid synthesis. This is Glycerol-3-phosphate dehydrogenase [NAD(P)+] from Latilactobacillus sakei subsp. sakei (strain 23K) (Lactobacillus sakei subsp. sakei).